The following is a 224-amino-acid chain: LexA repressor (224 aa).

Residues 31–51 constitute a DNA-binding region (H-T-H motif); sequence RAEIAAEFGFKSANAAEEHLQ. Residues Ser-142 and Lys-179 each act as for autocatalytic cleavage activity in the active site.

It belongs to the peptidase S24 family. In terms of assembly, homodimer.

It carries out the reaction Hydrolysis of Ala-|-Gly bond in repressor LexA.. Functionally, represses a number of genes involved in the response to DNA damage (SOS response), including recA and lexA. In the presence of single-stranded DNA, RecA interacts with LexA causing an autocatalytic cleavage which disrupts the DNA-binding part of LexA, leading to derepression of the SOS regulon and eventually DNA repair. The polypeptide is LexA repressor (Paracidovorax citrulli (strain AAC00-1) (Acidovorax citrulli)).